We begin with the raw amino-acid sequence, 164 residues long: UPF0304 protein YfbU (164 aa).

The protein belongs to the UPF0304 family.

This chain is UPF0304 protein YfbU (yfbU), found in Escherichia coli O6:H1 (strain CFT073 / ATCC 700928 / UPEC).